Here is a 296-residue protein sequence, read N- to C-terminus: Protein ea31 (296 aa).

The sequence is that of Protein ea31 (ea31) from Escherichia phage lambda (Bacteriophage lambda).